A 21-amino-acid chain; its full sequence is Serine protease inhibitor 3 (21 aa).

The protein belongs to the protease inhibitor I3 (leguminous Kunitz-type inhibitor) family. In terms of tissue distribution, tubers.

It localises to the vacuole. In terms of biological role, inhibits trypsin and chymotrypsin (serine proteases). Does not inhibit elastase, subtilisin, cathepsin L nor papain (serine and cysteine proteases). Protects the plant by inhibiting proteases of invading organisms, decreasing both hyphal growth and zoospores germination of Phytophthora infestans. This is Serine protease inhibitor 3 from Solanum tuberosum (Potato).